Reading from the N-terminus, the 180-residue chain is Cancer/testis antigen 1 (180 aa).

2 stretches are compositionally biased toward gly residues: residues 1–47 (MQAE…GPRG) and 55–66 (GPGGGAPRGPHG). The disordered stretch occupies residues 1–66 (MQAEGRGTGG…GGGAPRGPHG (66 aa)).

Belongs to the CTAG/PCC1 family. Expressed in testis and ovary and in a wide variety of cancers. Detected in uterine myometrium. Expressed from 18 weeks until birth in human fetal testis. In the adult testis, is strongly expressed in spermatogonia and in primary spermatocytes, but not in post-meiotic cells or in testicular somatic cells (at protein level).

Its subcellular location is the cytoplasm. The polypeptide is Cancer/testis antigen 1 (CTAG1A) (Homo sapiens (Human)).